The chain runs to 922 residues: Cell cycle and apoptosis regulator protein 2 (922 aa).

The segment at 1–39 (MSQFKRQRINPLPGGRNFSGAASTSLLGPPPGLLTPPVA) is disordered. Threonine 35 is subject to Phosphothreonine. Lysine 112 bears the N6-acetyllysine; by KAT8 mark. Position 123 is an N6-methyllysine (lysine 123). Position 124 is a phosphoserine (serine 124). Disordered stretches follow at residues 178 to 219 (LNRF…KPRH), 280 to 307 (RIQV…PTYS), 446 to 508 (KATE…EPAV), and 567 to 638 (VSPP…RGEA). Arginine 180 is modified (omega-N-methylarginine). A compositionally biased stretch (basic and acidic residues) spans 188–200 (GRLDQGRSDDYDS). Lysine 215 carries the post-translational modification N6-acetyllysine; by KAT8. Polar residues predominate over residues 473-491 (QADTSKQNTETMEATTQQD). Position 483 is a phosphothreonine (threonine 483). Phosphoserine is present on serine 568. The span at 571 to 601 (EPEKEEAAKEDAVKEEEAVKEEAVKVSKDEV) shows a compositional bias: basic and acidic residues. Residues 573-596 (EKEEAAKEDAVKEEEAVKEEAVKV) are a coiled coil. Residue lysine 590 forms a Glycyl lysine isopeptide (Lys-Gly) (interchain with G-Cter in SUMO2 and SUMO3); alternate linkage. Lysine 590 is covalently cross-linked (Glycyl lysine isopeptide (Lys-Gly) (interchain with G-Cter in SUMO2); alternate). An interaction with MCC region spans residues 609–669 (ESDSPLKEDG…DEFAGAKLEE (61 aa)). 5 positions are modified to phosphoserine: serine 612, serine 626, serine 674, serine 677, and serine 680. The residue at position 684 (tyrosine 684) is a Phosphotyrosine. A phosphoserine mark is found at serine 686 and serine 807. Residues 703-922 (DCLLAFVFFD…VEKEEPTPSN (220 aa)) are interaction with NR1D1. Positions 828-898 (LENKIHTLEL…QDFRRRLTPL (71 aa)) form a coiled coil. Phosphothreonine is present on threonine 896.

Component of the DBIRD complex. Interacts with ZNF326/ZIRD; the interaction is direct. Interacts (via N-terminus) with SIRT1, which inhibits the deacetylation of substrates. Interacts (via N-terminus) with SUV39H1; this interaction abolishes the interaction with SIRT1. Component of a nuclear receptor-mediated transcription complex composed of at least ZNF335, CCAR2 and EMSY; the complex stimulates the transcription of nuclear receptor target genes such as SOX9 and HOXA1. Within the complex interacts with EMSY and interacts with ZNF335 (via C-terminus). Components of this complex may associate with components of a histone methylation complex to form a complex at least composed of ZNF335, HCFC1, CCAR2, EMSY, MKI67, RBBP5, ASH2L and WDR5. Within this complex, interacts with ASH2L. Interacts with NR1D1. Interacts (via N-terminus) with ESR1 and ESR2. Interacts (via N-terminus) with HDAC3 (via C-terminus). Interacts with HDAC1 and MED2F. Interacts with MCC. Interacts (via N-terminus) with NR1H2 and NR1H3 in a ligand-independent manner. Interacts with CSNK2A1. Interacts (via N-terminus) with p53/TP53. Interacts (via N-terminus) with BRCA1 (via the BRCT domains). Interacts (via N-terminus) with CHEK2 (via protein kinase domain). Interacts with PSEM3. Interacts (via N-terminus) with PSIA3 and SENP1. The sumoylated form shows a preferential interaction with SIRT1 as compared to its unmodified form. Interacts with CECR2; may form part of the CERF-1 and/or CEF-5 ISWI chromatin remodeling complexes in embryonic stem cells. In terms of processing, acetylation at Lys-112 and Lys-215 by KAT8 prevents inhibitory binding to SIRT1 and increases its deacetylase activity. Post-translationally, genotoxic stress induces its sumoylation and sumoylation promotes the SIRT1-CCAR2 interaction which in turn inhibits SIRT1-mediated deacetylation of p53/TP53. Sumoylation leads to transcriptional activation of p53/TP53 by sequestering SIRT1 from p53/TP53. Desumoylated by SENP1.

It is found in the nucleus. The protein localises to the cytoplasm. It localises to the cytoskeleton. Its subcellular location is the spindle. Its function is as follows. Core component of the DBIRD complex, a multiprotein complex that acts at the interface between core mRNP particles and RNA polymerase II (RNAPII) and integrates transcript elongation with the regulation of alternative splicing: the DBIRD complex affects local transcript elongation rates and alternative splicing of a large set of exons embedded in (A + T)-rich DNA regions. Inhibits SIRT1 deacetylase activity leading to increasing levels of p53/TP53 acetylation and p53-mediated apoptosis. Inhibits SUV39H1 methyltransferase activity. Mediates ligand-dependent transcriptional activation by nuclear hormone receptors. Plays a critical role in maintaining genomic stability and cellular integrity following UV-induced genotoxic stress. Regulates the circadian expression of the core clock components NR1D1 and BMAL1. Enhances the transcriptional repressor activity of NR1D1 through stabilization of NR1D1 protein levels by preventing its ubiquitination and subsequent degradation. Represses the ligand-dependent transcriptional activation function of ESR2. Acts as a regulator of PCK1 expression and gluconeogenesis by a mechanism that involves, at least in part, both NR1D1 and SIRT1. Negatively regulates the deacetylase activity of HDAC3 and can alter its subcellular localization. Positively regulates the beta-catenin pathway (canonical Wnt signaling pathway) and is required for MCC-mediated repression of the beta-catenin pathway. Represses ligand-dependent transcriptional activation function of NR1H2 and NR1H3 and inhibits the interaction of SIRT1 with NR1H3. Plays an important role in tumor suppression through p53/TP53 regulation; stabilizes p53/TP53 by affecting its interaction with ubiquitin ligase MDM2. Represses the transcriptional activator activity of BRCA1. Inhibits SIRT1 in a CHEK2 and PSEM3-dependent manner and inhibits the activity of CHEK2 in vitro. In Mus musculus (Mouse), this protein is Cell cycle and apoptosis regulator protein 2 (Ccar2).